The chain runs to 348 residues: Putative methylthioribose-1-phosphate isomerase (348 aa).

Substrate contacts are provided by residues 55 to 57 (RGA), R98, and Q203. D244 functions as the Proton donor in the catalytic mechanism. 253–254 (NK) contacts substrate.

It belongs to the eIF-2B alpha/beta/delta subunits family. MtnA subfamily.

It carries out the reaction 5-(methylsulfanyl)-alpha-D-ribose 1-phosphate = 5-(methylsulfanyl)-D-ribulose 1-phosphate. Functionally, catalyzes the interconversion of methylthioribose-1-phosphate (MTR-1-P) into methylthioribulose-1-phosphate (MTRu-1-P). The protein is Putative methylthioribose-1-phosphate isomerase of Methanosarcina acetivorans (strain ATCC 35395 / DSM 2834 / JCM 12185 / C2A).